The sequence spans 419 residues: E3 ubiquitin-protein ligase RNF130 (419 aa).

Positions 1 to 27 (MSGAARAGPARLAALALLTCSLWPTRA) are cleaved as a signal peptide. The Extracellular portion of the chain corresponds to 28–194 (DNASQEYYTA…MPPKNFSRGS (167 aa)). Residues Asn-29, Asn-40, Asn-112, Asn-135, Asn-172, and Asn-189 are each glycosylated (N-linked (GlcNAc...) asparagine). The 72-residue stretch at 105-176 (IALLQRGNCT…SYLEKNISVQ (72 aa)) folds into the PA domain. A helical membrane pass occupies residues 195-217 (LVFVSISFIVLMIISSAWLIFYF). The Cytoplasmic segment spans residues 218–419 (IQKIRYTNAR…SLNANEVEWF (202 aa)). The RING-type zinc finger occupies 264–305 (CAVCIESYKQNDVVRVLPCKHVFHKSCVDPWLSEHCTCPMCK). Ser-341 carries the phosphoserine modification.

In testis sections, expressed in interstitial tissue and seminiferous tubules. In tubules, expression is mainly in postmeiotic germ cells and to a much lesser extent in Sertoli cells (at protein level). Expressed at high levels in liver, lung, stomach, heart and thymus.

It localises to the membrane. The protein resides in the cytoplasm. It carries out the reaction S-ubiquitinyl-[E2 ubiquitin-conjugating enzyme]-L-cysteine + [acceptor protein]-L-lysine = [E2 ubiquitin-conjugating enzyme]-L-cysteine + N(6)-ubiquitinyl-[acceptor protein]-L-lysine.. Its pathway is protein modification; protein ubiquitination. Its function is as follows. Acts as an E3 ubiquitin-protein ligase. May have a role during the programmed cell death of hematopoietic cells. The sequence is that of E3 ubiquitin-protein ligase RNF130 from Rattus norvegicus (Rat).